We begin with the raw amino-acid sequence, 600 residues long: Proline dehydrogenase 1, mitochondrial (600 aa).

Positions 155 to 177 (AEHKEMESCTSAAERDGSGTNKR) are disordered. Residues K368 and K486 each carry the N6-acetyllysine modification.

It belongs to the proline oxidase family. It depends on FAD as a cofactor. As to expression, expressed in lung, skeletal muscle and brain, to a lesser extent in heart and kidney, and weakly in liver, placenta and pancreas.

It localises to the mitochondrion matrix. The catalysed reaction is L-proline + a quinone = (S)-1-pyrroline-5-carboxylate + a quinol + H(+). The protein operates within amino-acid degradation; L-proline degradation into L-glutamate; L-glutamate from L-proline: step 1/2. Converts proline to delta-1-pyrroline-5-carboxylate. This chain is Proline dehydrogenase 1, mitochondrial, found in Homo sapiens (Human).